The sequence spans 379 residues: MKAFGDGQDTEDYLNLFLSGAPLLDTRAPVEFHKGAFPGAVNLPLMTDDERAQVGRCYKRHGQQAAIELGHRLAHGAVKESRVQGWREFAQRHPQGYLYCFRGGLRSSICQQWLAESGVAYPRVLGGYKAMRRFLIESLESICQEARLVLLAGHTGGGKTDLLARIPGAVDLERLAHHRGSAFGRRADGQPSQIDFENALAVALLRQRHGFANAPLLLEDESHLIGRCALPQSLRRAMAQAPLVVVEVALEQRVEHSFRNYILHKLDEWRRRQGEDEGFERFADDLRQSMYNIRTRLGGLRYQQLSEMLEAALARHRQGDPAYHRDWIRCLLEDYYDPMYAYQLQKRAERICFRGDAAAVRDYFAHSSSTTATVRDKRL.

The 124-residue stretch at 17-140 folds into the Rhodanese domain; that stretch reads FLSGAPLLDT…MRRFLIESLE (124 aa). Residue Cys100 is the S-selanylcysteine intermediate of the active site.

It belongs to the SelU family. In terms of assembly, monomer.

It carries out the reaction 5-methylaminomethyl-2-thiouridine(34) in tRNA + selenophosphate + (2E)-geranyl diphosphate + H2O + H(+) = 5-methylaminomethyl-2-selenouridine(34) in tRNA + (2E)-thiogeraniol + phosphate + diphosphate. The enzyme catalyses 5-methylaminomethyl-2-thiouridine(34) in tRNA + (2E)-geranyl diphosphate = 5-methylaminomethyl-S-(2E)-geranyl-thiouridine(34) in tRNA + diphosphate. It catalyses the reaction 5-methylaminomethyl-S-(2E)-geranyl-thiouridine(34) in tRNA + selenophosphate + H(+) = 5-methylaminomethyl-2-(Se-phospho)selenouridine(34) in tRNA + (2E)-thiogeraniol. The catalysed reaction is 5-methylaminomethyl-2-(Se-phospho)selenouridine(34) in tRNA + H2O = 5-methylaminomethyl-2-selenouridine(34) in tRNA + phosphate. In terms of biological role, involved in the post-transcriptional modification of the uridine at the wobble position (U34) of tRNA(Lys), tRNA(Glu) and tRNA(Gln). Catalyzes the conversion of 2-thiouridine (S2U-RNA) to 2-selenouridine (Se2U-RNA). Acts in a two-step process involving geranylation of 2-thiouridine (S2U) to S-geranyl-2-thiouridine (geS2U) and subsequent selenation of the latter derivative to 2-selenouridine (Se2U) in the tRNA chain. The protein is tRNA 2-selenouridine synthase of Hahella chejuensis (strain KCTC 2396).